The following is a 355-amino-acid chain: 3-dehydroquinate synthase (355 aa).

Residues E71–K76, G105–D109, T129–S130, K142, and K151 each bind NAD(+). Zn(2+)-binding residues include E184, H246, and H263.

This sequence belongs to the sugar phosphate cyclases superfamily. Dehydroquinate synthase family. Requires Co(2+) as cofactor. Zn(2+) serves as cofactor. The cofactor is NAD(+).

It localises to the cytoplasm. It catalyses the reaction 7-phospho-2-dehydro-3-deoxy-D-arabino-heptonate = 3-dehydroquinate + phosphate. It functions in the pathway metabolic intermediate biosynthesis; chorismate biosynthesis; chorismate from D-erythrose 4-phosphate and phosphoenolpyruvate: step 2/7. Its function is as follows. Catalyzes the conversion of 3-deoxy-D-arabino-heptulosonate 7-phosphate (DAHP) to dehydroquinate (DHQ). The chain is 3-dehydroquinate synthase from Streptococcus pneumoniae (strain 70585).